Here is a 151-residue protein sequence, read N- to C-terminus: Large ribosomal subunit protein bL9 (151 aa).

It belongs to the bacterial ribosomal protein bL9 family.

Binds to the 23S rRNA. This is Large ribosomal subunit protein bL9 from Prochlorococcus marinus (strain AS9601).